A 246-amino-acid polypeptide reads, in one-letter code: Ribosome maturation factor RimM (246 aa).

Over residues 1–15 (MKRKQESKGAGEKRQ) the composition is skewed to basic and acidic residues. A disordered region spans residues 1-63 (MKRKQESKGA…NPQFTTPNPD (63 aa)). The segment covering 45–54 (VPSPQSPIPN) has biased composition (pro residues). The region spanning 158–239 (GEDEYHVVDL…RIEITPPPGL (82 aa)) is the PRC barrel domain.

It belongs to the RimM family. In terms of assembly, binds ribosomal protein uS19.

Its subcellular location is the cytoplasm. Functionally, an accessory protein needed during the final step in the assembly of 30S ribosomal subunit, possibly for assembly of the head region. Essential for efficient processing of 16S rRNA. May be needed both before and after RbfA during the maturation of 16S rRNA. It has affinity for free ribosomal 30S subunits but not for 70S ribosomes. This is Ribosome maturation factor RimM from Nostoc sp. (strain PCC 7120 / SAG 25.82 / UTEX 2576).